Here is a 372-residue protein sequence, read N- to C-terminus: 4-hydroxy-3-methylbut-2-en-1-yl diphosphate synthase (flavodoxin) (372 aa).

The [4Fe-4S] cluster site is built by Cys270, Cys273, Cys305, and Glu312.

The protein belongs to the IspG family. Requires [4Fe-4S] cluster as cofactor.

It carries out the reaction (2E)-4-hydroxy-3-methylbut-2-enyl diphosphate + oxidized [flavodoxin] + H2O + 2 H(+) = 2-C-methyl-D-erythritol 2,4-cyclic diphosphate + reduced [flavodoxin]. The protein operates within isoprenoid biosynthesis; isopentenyl diphosphate biosynthesis via DXP pathway; isopentenyl diphosphate from 1-deoxy-D-xylulose 5-phosphate: step 5/6. In terms of biological role, converts 2C-methyl-D-erythritol 2,4-cyclodiphosphate (ME-2,4cPP) into 1-hydroxy-2-methyl-2-(E)-butenyl 4-diphosphate. The protein is 4-hydroxy-3-methylbut-2-en-1-yl diphosphate synthase (flavodoxin) of Pseudoalteromonas translucida (strain TAC 125).